The chain runs to 194 residues: Large ribosomal subunit protein uL5 (194 aa).

The protein belongs to the universal ribosomal protein uL5 family. In terms of assembly, part of the 50S ribosomal subunit; part of the 5S rRNA/L5/L18/L25 subcomplex. Contacts the 5S rRNA and the P site tRNA. Forms a bridge to the 30S subunit in the 70S ribosome.

In terms of biological role, this is one of the proteins that bind and probably mediate the attachment of the 5S RNA into the large ribosomal subunit, where it forms part of the central protuberance. In the 70S ribosome it contacts protein S13 of the 30S subunit (bridge B1b), connecting the 2 subunits; this bridge is implicated in subunit movement. Contacts the P site tRNA; the 5S rRNA and some of its associated proteins might help stabilize positioning of ribosome-bound tRNAs. The polypeptide is Large ribosomal subunit protein uL5 (Frankia alni (strain DSM 45986 / CECT 9034 / ACN14a)).